We begin with the raw amino-acid sequence, 250 residues long: Triosephosphate isomerase (250 aa).

Asparagine 9 to lysine 11 contacts substrate. Histidine 94 (electrophile) is an active-site residue. Residue glutamate 165 is the Proton acceptor of the active site. Substrate is bound by residues glycine 171, serine 211, and glycine 232–glycine 233.

This sequence belongs to the triosephosphate isomerase family. Homodimer.

It localises to the cytoplasm. The enzyme catalyses D-glyceraldehyde 3-phosphate = dihydroxyacetone phosphate. The protein operates within carbohydrate biosynthesis; gluconeogenesis. It functions in the pathway carbohydrate degradation; glycolysis; D-glyceraldehyde 3-phosphate from glycerone phosphate: step 1/1. Involved in the gluconeogenesis. Catalyzes stereospecifically the conversion of dihydroxyacetone phosphate (DHAP) to D-glyceraldehyde-3-phosphate (G3P). In Alkalilimnicola ehrlichii (strain ATCC BAA-1101 / DSM 17681 / MLHE-1), this protein is Triosephosphate isomerase.